The following is a 190-amino-acid chain: Xanthine phosphoribosyltransferase (190 aa).

2 residues coordinate xanthine: L20 and N27. Position 128–132 (128–132 (ANGHA)) interacts with 5-phospho-alpha-D-ribose 1-diphosphate. K156 contributes to the xanthine binding site.

Belongs to the purine/pyrimidine phosphoribosyltransferase family. Xpt subfamily. Homodimer.

It localises to the cytoplasm. The catalysed reaction is XMP + diphosphate = xanthine + 5-phospho-alpha-D-ribose 1-diphosphate. It participates in purine metabolism; XMP biosynthesis via salvage pathway; XMP from xanthine: step 1/1. Converts the preformed base xanthine, a product of nucleic acid breakdown, to xanthosine 5'-monophosphate (XMP), so it can be reused for RNA or DNA synthesis. In Pseudomonas aeruginosa (strain LESB58), this protein is Xanthine phosphoribosyltransferase.